We begin with the raw amino-acid sequence, 50 residues long: Insulin-1 (50 aa).

3 disulfides stabilise this stretch: cysteine 7–cysteine 36, cysteine 19–cysteine 49, and cysteine 35–cysteine 40.

It belongs to the insulin family. In terms of assembly, heterodimer of a B chain and an A chain linked by two disulfide bonds.

It localises to the secreted. Functionally, insulin decreases blood glucose concentration. It increases cell permeability to monosaccharides, amino acids and fatty acids. It accelerates glycolysis, the pentose phosphate cycle, and glycogen synthesis in liver. The sequence is that of Insulin-1 from Katsuwonus pelamis (Skipjack tuna).